The chain runs to 112 residues: Putative galactitol utilization operon repressor (112 aa).

The 56-residue stretch at 5-60 folds into the HTH deoR-type domain; sequence SFERRNKIIQLVNEQGTVLVQDLAGVFAASEATIRADLRFLEQKGVVTRFHGGAAK. Residues 22-41 constitute a DNA-binding region (H-T-H motif); the sequence is VLVQDLAGVFAASEATIRAD.

Repressor of the gat operon for galacticol transport and metabolism. In K12 strains the operon is constitutively expressed because this gene is inactive. The sequence is that of Putative galactitol utilization operon repressor (gatR) from Escherichia coli (strain K12).